The chain runs to 622 residues: Kinesin-like protein KIFC1 (622 aa).

The tract at residues 1-88 (MKEALEPAKK…KRPGKRPDWD (88 aa)) is disordered. Polar residues predominate over residues 32–41 (SSLSQPQGPT). The stretch at 95–264 (DLTEELKCYR…QELKGNIRVF (170 aa)) forms a coiled coil. Residues 260–612 (NIRVFCRVRP…LRFASKVNQC (353 aa)) form the Kinesin motor domain. Residues 279 to 323 (PGFLLFPHGPAGPSDPPTRLSLSRSDDRRSTLTRAPAPTTRHDFS) are disordered. At T309 the chain carries Phosphothreonine. Residue 360–367 (GQTGSGKT) coordinates ATP.

Belongs to the TRAFAC class myosin-kinesin ATPase superfamily. Kinesin family. NCD subfamily. As to quaternary structure, binds NUBP1 and NUBP2. Interacts with PPP1R42.

It localises to the nucleus. The protein localises to the cytoplasm. Its subcellular location is the cytoskeleton. It is found in the microtubule organizing center. The protein resides in the centrosome. It localises to the spindle. The protein localises to the early endosome. Its function is as follows. Minus end-directed microtubule-dependent motor required for bipolar spindle formation. May contribute to movement of early endocytic vesicles. Regulates cilium formation and structure. The sequence is that of Kinesin-like protein KIFC1 from Cricetulus griseus (Chinese hamster).